Here is a 181-residue protein sequence, read N- to C-terminus: Cytochrome c-type biogenesis protein CcmE (181 aa).

Topologically, residues 1-8 (MNPRRKSR) are cytoplasmic. Residues 9–29 (LKVVVSIIFGVAVAAGLTLYA) form a helical; Signal-anchor for type II membrane protein membrane-spanning segment. Over 30–181 (LSQNIDLFYT…TLKTLQGEAN (152 aa)) the chain is Periplasmic. His-131 and Tyr-135 together coordinate heme. Basic and acidic residues-rich tracts occupy residues 135–148 (YMPPELGDKLKEQH) and 156–166 (ADLKGTSARDK). Residues 135–166 (YMPPELGDKLKEQHGAAGISEADLKGTSARDK) are disordered.

Belongs to the CcmE/CycJ family.

The protein resides in the cell inner membrane. Functionally, heme chaperone required for the biogenesis of c-type cytochromes. Transiently binds heme delivered by CcmC and transfers the heme to apo-cytochromes in a process facilitated by CcmF and CcmH. The chain is Cytochrome c-type biogenesis protein CcmE from Actinobacillus pleuropneumoniae serotype 7 (strain AP76).